A 223-amino-acid polypeptide reads, in one-letter code: Thiopurine S-methyltransferase (223 aa).

Positions 10, 45, 66, and 127 each coordinate S-adenosyl-L-methionine.

This sequence belongs to the class I-like SAM-binding methyltransferase superfamily. TPMT family.

The protein localises to the cytoplasm. The enzyme catalyses S-adenosyl-L-methionine + a thiopurine = S-adenosyl-L-homocysteine + a thiopurine S-methylether.. The polypeptide is Thiopurine S-methyltransferase (Shewanella woodyi (strain ATCC 51908 / MS32)).